The primary structure comprises 498 residues: Glutamyl-tRNA(Gln) amidotransferase subunit A (498 aa).

Residues Lys-79 and Ser-154 each act as charge relay system in the active site. Ser-178 serves as the catalytic Acyl-ester intermediate.

The protein belongs to the amidase family. GatA subfamily. In terms of assembly, heterotrimer of A, B and C subunits.

The enzyme catalyses L-glutamyl-tRNA(Gln) + L-glutamine + ATP + H2O = L-glutaminyl-tRNA(Gln) + L-glutamate + ADP + phosphate + H(+). In terms of biological role, allows the formation of correctly charged Gln-tRNA(Gln) through the transamidation of misacylated Glu-tRNA(Gln) in organisms which lack glutaminyl-tRNA synthetase. The reaction takes place in the presence of glutamine and ATP through an activated gamma-phospho-Glu-tRNA(Gln). This is Glutamyl-tRNA(Gln) amidotransferase subunit A from Psychrobacter cryohalolentis (strain ATCC BAA-1226 / DSM 17306 / VKM B-2378 / K5).